We begin with the raw amino-acid sequence, 284 residues long: Phosphate import ATP-binding protein PstB 2 (284 aa).

The segment covering M1 to S22 has biased composition (polar residues). The interval M1–D29 is disordered. The region spanning L36–I278 is the ABC transporter domain. Residue G68 to T75 coordinates ATP.

The protein belongs to the ABC transporter superfamily. Phosphate importer (TC 3.A.1.7) family. As to quaternary structure, the complex is composed of two ATP-binding proteins (PstB), two transmembrane proteins (PstC and PstA) and a solute-binding protein (PstS).

The protein localises to the cell membrane. It catalyses the reaction phosphate(out) + ATP + H2O = ADP + 2 phosphate(in) + H(+). Part of the ABC transporter complex PstSACB involved in phosphate import. Responsible for energy coupling to the transport system. The polypeptide is Phosphate import ATP-binding protein PstB 2 (Natronomonas pharaonis (strain ATCC 35678 / DSM 2160 / CIP 103997 / JCM 8858 / NBRC 14720 / NCIMB 2260 / Gabara) (Halobacterium pharaonis)).